The chain runs to 413 residues: Palmitoyltransferase ZDHHC6 (413 aa).

Residues 1-24 are Cytoplasmic-facing; that stretch reads MGTFCSVVKFENLQELKRLCHWGP. The helical transmembrane segment at 25 to 45 threads the bilayer; that stretch reads IIALGVIAICSAMAMIDSVLW. Topologically, residues 46–57 are lumenal; sequence YWPLHTTGGSVN. The helical transmembrane segment at 58–78 threads the bilayer; the sequence is FIMLINWTVMILYNYFNAMFV. The Cytoplasmic portion of the chain corresponds to 79 to 143; it reads GPGFVPLGWK…NCCGYQNHAS (65 aa). The 51-residue stretch at 99 to 149 folds into the DHHC domain; it reads QYCKVCQAYKAPRSHHCRKCNRCVMKMDHHCPWINNCCGYQNHASFTLFLL. Cys129 functions as the S-palmitoyl cysteine intermediate in the catalytic mechanism. Residues 144–164 form a helical membrane-spanning segment; sequence FTLFLLLAPLGCIHAAFIFVM. Residues 165-194 are Lumenal-facing; that stretch reads TMYTQLYNRLSFGWNTVKIDMSAARRDPLP. The helical transmembrane segment at 195-215 threads the bilayer; the sequence is IIPFGLAAFAATLFALGLALG. Residues 216 to 413 are Cytoplasmic-facing; sequence TTIAVGMLFF…QAPEGEKKNR (198 aa). The 86-residue stretch at 313 to 398 folds into the SH3 domain; sequence VRSVRYKVIE…PRNCVEKCPC (86 aa). Residues Cys328, Cys329, and Cys343 are each lipidated (S-palmitoyl cysteine). Positions 410–413 match the Di-lysine motif motif; sequence KKNR.

It belongs to the DHHC palmitoyltransferase family. Homooligomerizes. Interacts with SELENOK. Palmitoylated at 3 different sites by ZDHHC16. The combination of the different palmitoylation events strongly affects the quaternary assembly of ZDHHC6, its localization, stability and function. Palmitoylation at Cys-328 accelerates the turnover of ZDHHC6. Depalmitoylated by LYPLA2.

The protein resides in the endoplasmic reticulum membrane. It carries out the reaction L-cysteinyl-[protein] + hexadecanoyl-CoA = S-hexadecanoyl-L-cysteinyl-[protein] + CoA. The enzyme catalyses L-cysteinyl-[protein] + octadecanoyl-CoA = S-octadecanoyl-L-cysteinyl-[protein] + CoA. Its function is as follows. Endoplasmic reticulum palmitoyl acyltransferase that mediates palmitoylation of proteins such as AMFR, CALX, ITPR1 and TFRC. Palmitoylates calnexin (CALX), which is required for its association with the ribosome-translocon complex and efficient folding of glycosylated proteins. Mediates palmitoylation of AMFR, promoting AMFR distribution to the peripheral endoplasmic reticulum. Together with SELENOK, palmitoylates ITPR1 in immune cells, leading to regulate ITPR1 stability and function. Stearoyltransferase that mediates stearoylation of TFRC to inhibit TFRC-mediated activation of the JNK pathway and mitochondrial fragmentation. The chain is Palmitoyltransferase ZDHHC6 from Bos taurus (Bovine).